A 467-amino-acid chain; its full sequence is Cysteine--tRNA ligase (467 aa).

Cysteine 29 is a Zn(2+) binding site. The short motif at 31–41 (PTVYNYVHIGN) is the 'HIGH' region element. 3 residues coordinate Zn(2+): cysteine 209, histidine 234, and glutamate 238. Positions 267–271 (KMSKS) match the 'KMSKS' region motif. Lysine 270 is an ATP binding site.

It belongs to the class-I aminoacyl-tRNA synthetase family. As to quaternary structure, monomer. Zn(2+) serves as cofactor.

The protein resides in the cytoplasm. The enzyme catalyses tRNA(Cys) + L-cysteine + ATP = L-cysteinyl-tRNA(Cys) + AMP + diphosphate. In Xylella fastidiosa (strain 9a5c), this protein is Cysteine--tRNA ligase.